The sequence spans 284 residues: 4-diphosphocytidyl-2-C-methyl-D-erythritol kinase (284 aa).

The active site involves Lys14. 98–108 lines the ATP pocket; sequence PMGGGLGGGSS. The active site involves Asp140.

This sequence belongs to the GHMP kinase family. IspE subfamily.

It carries out the reaction 4-CDP-2-C-methyl-D-erythritol + ATP = 4-CDP-2-C-methyl-D-erythritol 2-phosphate + ADP + H(+). Its pathway is isoprenoid biosynthesis; isopentenyl diphosphate biosynthesis via DXP pathway; isopentenyl diphosphate from 1-deoxy-D-xylulose 5-phosphate: step 3/6. In terms of biological role, catalyzes the phosphorylation of the position 2 hydroxy group of 4-diphosphocytidyl-2C-methyl-D-erythritol. In Shewanella sp. (strain MR-4), this protein is 4-diphosphocytidyl-2-C-methyl-D-erythritol kinase.